A 530-amino-acid polypeptide reads, in one-letter code: Cilia- and flagella-associated protein 97 (530 aa).

Residue Ser-19 is modified to Phosphoserine. Disordered stretches follow at residues 29-83 and 116-258; these read TNSV…PVEN and IPNR…LSTP. Over residues 35–49 the composition is skewed to basic and acidic residues; sequence KQNDDPKERIDKDTK. Residues 50-63 are compositionally biased toward polar residues; that stretch reads NVNSNTGMQTTENY. The segment covering 67 to 82 has biased composition (basic and acidic residues); sequence KGNERNVKFPPEHPVE. The segment covering 129 to 139 has biased composition (acidic residues); that stretch reads GDYYTDGEESS. Thr-133 bears the Phosphothreonine mark. 2 positions are modified to phosphoserine: Ser-138 and Ser-139. Residues 170 to 203 are compositionally biased toward low complexity; it reads SSSSSSSLSSSSSGSGTDCLDGGSDSHLSDSSPS. Phosphoserine is present on Ser-215. Over residues 227-236 the composition is skewed to polar residues; it reads TETQPSSTTP. Phosphoserine is present on residues Ser-245 and Ser-327. Residues 372–447 are a coiled coil; sequence KNYSFTREEV…ALLKRLEAVK (76 aa). 2 disordered regions span residues 395 to 417 and 483 to 530; these read LSRQ…HPPK and QYSP…TAWL. The span at 491 to 501 shows a compositional bias: polar residues; that stretch reads SRTSSATSGLS.

This sequence belongs to the CFAP97 family.

This Pongo abelii (Sumatran orangutan) protein is Cilia- and flagella-associated protein 97.